The sequence spans 966 residues: LRR receptor-like serine/threonine-protein kinase ERL1 (966 aa).

The signal sequence occupies residues 1–25; it reads MKEKMQRMVLSLAMVGFMVFGVASA. The Extracellular portion of the chain corresponds to 26 to 582; it reads MNNEGKALMA…PLPKSRVFSR (557 aa). An LRR 1 repeat occupies 40-63; it reads FSNLVNMLLDWDDVHNSDLCSWRG. N-linked (GlcNAc...) asparagine glycans are attached at residues Asn68 and Asn77. 20 LRR repeats span residues 75 to 94, 95 to 118, 120 to 142, 143 to 166, 168 to 190, 192 to 214, 215 to 238, 239 to 261, 262 to 285, 286 to 311, 313 to 333, 334 to 357, 359 to 381, 383 to 404, 405 to 429, 431 to 453, 454 to 476, 478 to 500, 501 to 525, and 527 to 550; these read SLNL…IGDL, RNLQ…IGNC, SLVY…ISKL, KQLE…LTQI, NLKR…LYWN, VLQY…MCQL, TGLW…IGNC, TSFQ…NIGF, LQVA…IGLM, QALA…NLSF, GKLY…LGNM, SRLS…LGKL, QLFE…ISSC, ALNQ…AFRN, LGSL…LGHI, NLDK…LGDL, EHLL…EFGN, RSIQ…ELGQ, LQNL…LTNC, and TLVN…NFSR. Asn226 and Asn237 each carry an N-linked (GlcNAc...) asparagine glycan. N-linked (GlcNAc...) asparagine glycosylation is found at Asn308 and Asn332. Asn377 carries an N-linked (GlcNAc...) asparagine glycan. Asn412, Asn441, and Asn460 each carry an N-linked (GlcNAc...) asparagine glycan. Asn532, Asn537, and Asn547 each carry an N-linked (GlcNAc...) asparagine glycan. A helical transmembrane segment spans residues 583–603; sequence GALICIVLGVITLLCMIFLAV. Residues 604 to 966 lie on the Cytoplasmic side of the membrane; the sequence is YKSMQQKKIL…FREVISKSSI (363 aa). Thr637 and Thr645 each carry phosphothreonine. A Protein kinase domain is found at 648 to 921; the sequence is LNEKFIIGYG…RVLLSLVPSL (274 aa). ATP is bound by residues 654 to 662 and Lys676; that span reads IGYGASSTV. Phosphotyrosine occurs at positions 721 and 760. Asp773 functions as the Proton acceptor in the catalytic mechanism. The residue at position 815 (Tyr815) is a Phosphotyrosine. Phosphothreonine is present on Thr823.

The protein belongs to the protein kinase superfamily. Ser/Thr protein kinase family. As to quaternary structure, homodimer and heterodimer with ERECTA and TMM. Interacts with EPF1 and EPF2. Interacts with SERK1, SERK2, SERK3/BAK1 and SERK4 in a EPF1-induced manner. As to expression, mostly expressed in developing organs, including bud clusters, flowers, siliques and young rosettes. Also detected in mature aboveground organs, such as leaves, stems and pedicels, but barely in roots.

The protein resides in the cell membrane. It carries out the reaction L-seryl-[protein] + ATP = O-phospho-L-seryl-[protein] + ADP + H(+). It catalyses the reaction L-threonyl-[protein] + ATP = O-phospho-L-threonyl-[protein] + ADP + H(+). In terms of biological role, receptor kinase that regulates inflorescence architecture and organ shape as well as stomatal patterning, including density and clustering, together with ER and ERL2. Redundantly involved with ER in procambial development regulation. Forms a functional ligand-receptor pair with EPF1 (AC Q8S8I4). Forms a constitutive complex with TMM involved in the recognition of the stomatal regulatory peptides EPF1, EPF2 and EPFL9/STOMAGEN. The protein is LRR receptor-like serine/threonine-protein kinase ERL1 of Arabidopsis thaliana (Mouse-ear cress).